The sequence spans 797 residues: Complex I intermediate-associated protein 84, mitochondrial (797 aa).

Residues methionine 1–threonine 69 constitute a mitochondrion transit peptide.

The protein resides in the mitochondrion. Chaperone protein involved in the assembly of the mitochondrial NADH:ubiquinone oxidoreductase complex (complex I). The polypeptide is Complex I intermediate-associated protein 84, mitochondrial (cia84) (Neurospora crassa (strain ATCC 24698 / 74-OR23-1A / CBS 708.71 / DSM 1257 / FGSC 987)).